We begin with the raw amino-acid sequence, 391 residues long: Suppressor APC domain-containing protein 2 (391 aa).

A disordered region spans residues 1-20; the sequence is MAVAAMAERGRLSHAAPAPS. T218 bears the Phosphothreonine mark. Positions 226–277 form a coiled coil; that stretch reads SLLKQMKELDQEQEVLLQGLEMMARGRDWYQQQLQRVQERQRRLSQSRAAAD. At S283 the chain carries Phosphoserine. Residues 340 to 381 adopt a coiled-coil conformation; sequence LKEQNRLLTQEVTDKSERITQLEQEKSALIKQLFEARALSQQ.

As to quaternary structure, interacts with a spindle orientation complex at least composed of GNAI1, GPSM2 and NUMA1. Interacts with GPSM2 (via TPR motifs); this interaction is required to prevent GPSM2 anchoring at the mitotic apical cortex and is inhibited in presence of NUMA1 in a dose dependent manner. Interacts with PARD3. In terms of tissue distribution, expressed in the retina. Expressed in retinal progenitor cells and newly differentiated neurons but not in mature retinal cells (at protein level).

It localises to the cytoplasm. The protein localises to the nucleus. The protein resides in the cell cortex. Its subcellular location is the apical cell membrane. It is found in the cell junction. It localises to the tight junction. Functionally, plays a role in planar mitotic spindle orientation in retinal progenitor cells (RPCs) and promotes the production of symmetric terminal divisions. Negatively regulates the mitotic apical cortex localization of GPSM2. Involved also in positive regulation of cell proliferation and tumor cell growth. This Mus musculus (Mouse) protein is Suppressor APC domain-containing protein 2.